Consider the following 363-residue polypeptide: B3 domain-containing transcription factor LEC2 (363 aa).

Positions 1-27 are disordered; that stretch reads MDNFLPFPSSNANSVQELSMDPNNNRS. A compositionally biased stretch (polar residues) spans 8–27; sequence PSSNANSVQELSMDPNNNRS. A DNA-binding region (TF-B3) is located at residues 171–272; it reads CEKELKNSDV…NLYFAMNGNS (102 aa). The disordered stretch occupies residues 331-351; it reads QHHQATSSSMPPEDHAYVGSS.

It is found in the nucleus. In terms of biological role, transcription regulator that plays a central role in embryo development. Required for the maintenance of suspensor morphology, specification of cotyledon identity, progression through the maturation phase and suppression of premature germination. Ectopic expression is sufficient to promote somatic embryogenesis. The chain is B3 domain-containing transcription factor LEC2 (LEC2) from Arabidopsis thaliana (Mouse-ear cress).